Reading from the N-terminus, the 316-residue chain is Probable porphobilinogen deaminase (316 aa).

C234 carries the S-(dipyrrolylmethanemethyl)cysteine modification.

This sequence belongs to the HMBS family. Requires dipyrromethane as cofactor.

It carries out the reaction 4 porphobilinogen + H2O = hydroxymethylbilane + 4 NH4(+). The protein operates within porphyrin-containing compound metabolism; protoporphyrin-IX biosynthesis; coproporphyrinogen-III from 5-aminolevulinate: step 2/4. Functionally, tetrapolymerization of the monopyrrole PBG into the hydroxymethylbilane pre-uroporphyrinogen in several discrete steps. This chain is Probable porphobilinogen deaminase, found in Methanosarcina mazei (strain ATCC BAA-159 / DSM 3647 / Goe1 / Go1 / JCM 11833 / OCM 88) (Methanosarcina frisia).